Reading from the N-terminus, the 466-residue chain is 3-isopropylmalate dehydratase large subunit (466 aa).

[4Fe-4S] cluster contacts are provided by Cys347, Cys407, and Cys410.

It belongs to the aconitase/IPM isomerase family. LeuC type 1 subfamily. As to quaternary structure, heterodimer of LeuC and LeuD. It depends on [4Fe-4S] cluster as a cofactor.

The catalysed reaction is (2R,3S)-3-isopropylmalate = (2S)-2-isopropylmalate. The protein operates within amino-acid biosynthesis; L-leucine biosynthesis; L-leucine from 3-methyl-2-oxobutanoate: step 2/4. In terms of biological role, catalyzes the isomerization between 2-isopropylmalate and 3-isopropylmalate, via the formation of 2-isopropylmaleate. The chain is 3-isopropylmalate dehydratase large subunit from Vibrio vulnificus (strain CMCP6).